A 629-amino-acid polypeptide reads, in one-letter code: Replication protein A 70 kDa DNA-binding subunit D (629 aa).

The interval 112 to 135 (LDSKSGEEEAREPKKQKLEHSPVS) is disordered. Residues 115–131 (KSGEEEAREPKKQKLEH) show a composition bias toward basic and acidic residues. A DNA-binding region (OB) is located at residues 194-280 (WTIKVRVTNK…QNDYEMTLNE (87 aa)). The C4-type zinc finger occupies 492-512 (CKTCNKKVTEALDSGYWCEGC).

It belongs to the replication factor A protein 1 family. Heterotrimer of RPA1, RPA2 and RPA3 (canonical replication protein A complex).

Its subcellular location is the nucleus. Its function is as follows. Component of the replication protein A complex (RPA) required for DNA recombination, repair and replication. The activity of RPA is mediated by single-stranded DNA binding and protein interactions. Probably involved in repair of double-strand DNA breaks (DSBs) induced by genotoxic stresses. In Arabidopsis thaliana (Mouse-ear cress), this protein is Replication protein A 70 kDa DNA-binding subunit D (RPA1D).